A 407-amino-acid chain; its full sequence is NADH-quinone oxidoreductase subunit D (407 aa).

This sequence belongs to the complex I 49 kDa subunit family. NDH-1 is composed of 14 different subunits. Subunits NuoB, C, D, E, F, and G constitute the peripheral sector of the complex.

It is found in the cell inner membrane. It carries out the reaction a quinone + NADH + 5 H(+)(in) = a quinol + NAD(+) + 4 H(+)(out). Its function is as follows. NDH-1 shuttles electrons from NADH, via FMN and iron-sulfur (Fe-S) centers, to quinones in the respiratory chain. The immediate electron acceptor for the enzyme in this species is believed to be ubiquinone. Couples the redox reaction to proton translocation (for every two electrons transferred, four hydrogen ions are translocated across the cytoplasmic membrane), and thus conserves the redox energy in a proton gradient. The polypeptide is NADH-quinone oxidoreductase subunit D (Roseobacter denitrificans (strain ATCC 33942 / OCh 114) (Erythrobacter sp. (strain OCh 114))).